Consider the following 160-residue polypeptide: Large ribosomal subunit protein eL21 (160 aa).

Belongs to the eukaryotic ribosomal protein eL21 family.

The chain is Large ribosomal subunit protein eL21 (rpl21) from Dictyostelium discoideum (Social amoeba).